The primary structure comprises 392 residues: MSAVLKDPIPAPGRPESTRPEPRPGVLAIEAYVPGKSHAPGVEKVFKLSSNETPLGPSEKAVAAFAEAGRKLEDYPDGSATVLRQAIATAYGLDPARIICGAGSDEILNLVAHTYVGPGDEVIFSEHGFLVYKIATLASGGTPVVARERDLTADVDAILALVTPRTRLVFLANPNNPTGTYLPFDEVRRLHAGLPANVLLVLDAAYAEYVRRNDYETGLELALTADNVLMSRTFSKIHGLAALRIGWAVGPAHVIDAMNRVRGPFNMNTPALLAGAAAIADAAHVEKAVAHNARWLPWLTEQIEGLGLKVTPSVANFLLIHFPDTPGRTAKEADAFLMKRGLVLRQVASYGLPHALRMTVGTEEANHLVVAALADFMSGNSSAGQEAGGKDK.

The disordered stretch occupies residues 1 to 24; the sequence is MSAVLKDPIPAPGRPESTRPEPRP. N6-(pyridoxal phosphate)lysine is present on Lys-236.

This sequence belongs to the class-II pyridoxal-phosphate-dependent aminotransferase family. Histidinol-phosphate aminotransferase subfamily. Homodimer. It depends on pyridoxal 5'-phosphate as a cofactor.

The enzyme catalyses L-histidinol phosphate + 2-oxoglutarate = 3-(imidazol-4-yl)-2-oxopropyl phosphate + L-glutamate. The protein operates within amino-acid biosynthesis; L-histidine biosynthesis; L-histidine from 5-phospho-alpha-D-ribose 1-diphosphate: step 7/9. This chain is Histidinol-phosphate aminotransferase, found in Xanthobacter autotrophicus (strain ATCC BAA-1158 / Py2).